The following is a 384-amino-acid chain: MPLRKENPLLSPVNGLLVDLPSPSNISYLWNFGSLLGLCLAMQIVTGCFLSMHYCAEVGLAFASVGQNSDVNYGFLLRYFHANGASLFFLCLYFHIGRSLYYGGYLKGPVWRVGIVIFLLTMATAFLGYVLPWGQMSFWGATVITNLLSAIPYVGTDVVQWVWGGFSVSGATLTRFFSLHFLFPFILAILVVVHLIFLHIEGSNSPVGSKTPVVDVVFHVYYTSKDWYGIVVTLMLLSIVVYLMPNLLGDPENFIQANSLVTPVHIQPEWYFLFAYAILRSIPNKFGGVVSMFLSILILFFFPLLHRSWLRGLPFRPFGRMAFWSFVVNFVLLTWIGSLVVEEPFIIIGQLVALYYFFYFLILIPLLGEVENNLLFKQRKKCDL.

4 consecutive transmembrane segments (helical) span residues 32-52 (FGSLLGLCLAMQIVTGCFLSM), 75-96 (FLLRYFHANGASLFFLCLYFHI), 111-131 (WRVGIVIFLLTMATAFLGYVL), and 176-196 (FFSLHFLFPFILAILVVVHLI). The heme b site is built by histidine 81 and histidine 95. Residues histidine 180 and histidine 194 each contribute to the heme b site. An a ubiquinone-binding site is contributed by histidine 199. 4 consecutive transmembrane segments (helical) span residues 224-244 (SKDWYGIVVTLMLLSIVVYLM), 286-306 (FGGVVSMFLSILILFFFPLLH), 318-338 (FGRMAFWSFVVNFVLLTWIGS), and 345-366 (FIIIGQLVALYYFFYFLILIPL).

Belongs to the cytochrome b family. The main subunits of complex b-c1 are: cytochrome b, cytochrome c1 and the Rieske protein. Requires heme b as cofactor.

The protein resides in the mitochondrion inner membrane. Its function is as follows. Component of the ubiquinol-cytochrome c reductase complex (complex III or cytochrome b-c1 complex) that is part of the mitochondrial respiratory chain. The b-c1 complex mediates electron transfer from ubiquinol to cytochrome c. Contributes to the generation of a proton gradient across the mitochondrial membrane that is then used for ATP synthesis. This chain is Cytochrome b (MT-CYB), found in Acropora tenuis (Purple tipped acropora).